Reading from the N-terminus, the 317-residue chain is Apolipoprotein E (317 aa).

The signal sequence occupies residues 1–18 (MKVLWAALLVTFLAGCQA). 8 repeat units span residues 80–101 (TLMD…EQLS), 102–123 (PVAE…ARLG), 124–145 (ADME…AMLG), 146–167 (QSTE…KRLL), 168–189 (RDAD…EGAE), 190–211 (RGVS…VRAA), 212–233 (TVGS…ERLR), and 234–255 (ARME…EQVA). An 8 X 22 AA approximate tandem repeats region spans residues 80 to 255 (TLMDETMKEL…RLDEVKEQVA (176 aa)). Methionine 143 carries the post-translational modification Methionine sulfoxide. Serine 147 bears the Phosphoserine mark. The segment at 158 to 168 (HLRKLRKRLLR) is LDL and other lipoprotein receptors binding. A heparin-binding site is contributed by 162 to 165 (LRKR). The lipid-binding and lipoprotein association stretch occupies residues 210-290 (AATVGSLASQ…SWFEPLVEDM (81 aa)). 229–236 (GERLRARM) lines the heparin pocket. A homooligomerization region spans residues 266 to 317 (QQISLQAEAFQARLKSWFEPLVEDMQRQWAGLVEKVQAAVGASTAPVPIDNH). Residues 278–290 (RLKSWFEPLVEDM) form a specificity for association with VLDL region.

This sequence belongs to the apolipoprotein A1/A4/E family. As to quaternary structure, homotetramer. May interact with ABCA1; functionally associated with ABCA1 in the biogenesis of HDLs. May interact with APP/A4 amyloid-beta peptide; the interaction is extremely stable in vitro but its physiological significance is unclear. May interact with MAPT. May interact with MAP2. In the cerebrospinal fluid, interacts with secreted SORL1. Interacts with PMEL; this allows the loading of PMEL luminal fragment on ILVs to induce fibril nucleation. Post-translationally, APOE exists as multiple glycosylated and sialylated glycoforms within cells and in plasma. The extent of glycosylation and sialylation are tissue and context specific. In terms of processing, glycated in plasma VLDL. Phosphorylated by FAM20C in the extracellular medium.

It is found in the secreted. Its subcellular location is the extracellular space. The protein resides in the extracellular matrix. It localises to the extracellular vesicle. The protein localises to the endosome. It is found in the multivesicular body. In terms of biological role, APOE is an apolipoprotein, a protein associating with lipid particles, that mainly functions in lipoprotein-mediated lipid transport between organs via the plasma and interstitial fluids. APOE is a core component of plasma lipoproteins and is involved in their production, conversion and clearance. Apolipoproteins are amphipathic molecules that interact both with lipids of the lipoprotein particle core and the aqueous environment of the plasma. As such, APOE associates with chylomicrons, chylomicron remnants, very low density lipoproteins (VLDL) and intermediate density lipoproteins (IDL) but shows a preferential binding to high-density lipoproteins (HDL). It also binds a wide range of cellular receptors including the LDL receptor/LDLR, the LDL receptor-related proteins LRP1, LRP2 and LRP8 and the very low-density lipoprotein receptor/VLDLR that mediate the cellular uptake of the APOE-containing lipoprotein particles. Finally, APOE also has a heparin-binding activity and binds heparan-sulfate proteoglycans on the surface of cells, a property that supports the capture and the receptor-mediated uptake of APOE-containing lipoproteins by cells. A main function of APOE is to mediate lipoprotein clearance through the uptake of chylomicrons, VLDLs, and HDLs by hepatocytes. APOE is also involved in the biosynthesis by the liver of VLDLs as well as their uptake by peripheral tissues ensuring the delivery of triglycerides and energy storage in muscle, heart and adipose tissues. By participating in the lipoprotein-mediated distribution of lipids among tissues, APOE plays a critical role in plasma and tissues lipid homeostasis. APOE is also involved in two steps of reverse cholesterol transport, the HDLs-mediated transport of cholesterol from peripheral tissues to the liver, and thereby plays an important role in cholesterol homeostasis. First, it is functionally associated with ABCA1 in the biogenesis of HDLs in tissues. Second, it is enriched in circulating HDLs and mediates their uptake by hepatocytes. APOE also plays an important role in lipid transport in the central nervous system, regulating neuron survival and sprouting. In Macaca fascicularis (Crab-eating macaque), this protein is Apolipoprotein E (APOE).